Here is a 341-residue protein sequence, read N- to C-terminus: DNA fragmentation factor subunit beta (341 aa).

A CIDE-N domain is found at 7–83 (KPKTFKLRSL…LLTAGQTWQG (77 aa)).

In terms of assembly, heterodimer of DFFA and DFFB. Interacts with H1-1.

It is found in the cytoplasm. It localises to the nucleus. With respect to regulation, inhibited by DFFA (DFF45). Interacts with HIST1H1A. Functionally, nuclease that induces DNA fragmentation and chromatin condensation during apoptosis. Degrades naked DNA and induces apoptotic morphology. The sequence is that of DNA fragmentation factor subunit beta (DFFB) from Bos taurus (Bovine).